A 368-amino-acid polypeptide reads, in one-letter code: Chorismate synthase (368 aa).

Residues Arg-48 and Arg-54 each contribute to the NADP(+) site. Residues 131–133, 243–244, Gly-292, 307–311, and Arg-333 contribute to the FMN site; these read RSS, NA, and KPTSS.

The protein belongs to the chorismate synthase family. As to quaternary structure, homotetramer. FMNH2 serves as cofactor.

It carries out the reaction 5-O-(1-carboxyvinyl)-3-phosphoshikimate = chorismate + phosphate. The protein operates within metabolic intermediate biosynthesis; chorismate biosynthesis; chorismate from D-erythrose 4-phosphate and phosphoenolpyruvate: step 7/7. Functionally, catalyzes the anti-1,4-elimination of the C-3 phosphate and the C-6 proR hydrogen from 5-enolpyruvylshikimate-3-phosphate (EPSP) to yield chorismate, which is the branch point compound that serves as the starting substrate for the three terminal pathways of aromatic amino acid biosynthesis. This reaction introduces a second double bond into the aromatic ring system. The chain is Chorismate synthase from Nitrobacter winogradskyi (strain ATCC 25391 / DSM 10237 / CIP 104748 / NCIMB 11846 / Nb-255).